Consider the following 224-residue polypeptide: Inhibitor of apoptosis protein (224 aa).

Residues Ile-29 to Met-92 form a BIR repeat. Positions 62, 65, 82, and 89 each coordinate Zn(2+).

The protein belongs to the asfivirus IAP family. As to quaternary structure, interacts with subunit p17 of host CASP3.

It localises to the host cytoplasm. The protein localises to the virion. Prevent apoptosis of host cell by inhibiting caspase-3/CASP3 activation to promote the viral replication. Also induces the activation of host NF-kappaB. The chain is Inhibitor of apoptosis protein (p27) from African swine fever virus (isolate Pig/Haiti/H811/1981) (ASFV).